Reading from the N-terminus, the 283-residue chain is Trafficking protein particle complex subunit 31 (283 aa).

The span at 1 to 16 shows a compositional bias: polar residues; it reads MSQRIIQPSASDQQFP. Disordered stretches follow at residues 1–20 and 126–156; these read MSQR…GKSD and SSKL…RLQE. The segment covering 126 to 151 has biased composition (low complexity); it reads SSKLSNASNSPGMLANSSTATSASAN.

It belongs to the TRAPP small subunits family. BET3 subfamily. Part of the multisubunit TRAPP (transport protein particle) I complex composed of BET3, BET5, TRS20, TRS23, TRS31 and TRS33. Part of the multisubunit TRAPP (transport protein particle) II complex composed of BET3, BET5, TRS20, TRS23, TRS31, TRS33, TRS65, TRS85, TRS120 and TRS130. Part of the multisubunit TRAPP (transport protein particle) III complex composed of BET3, BET5, TRS20, TRS23, TRS31, TRS33 and TRS85.

The protein localises to the golgi apparatus. Its subcellular location is the cis-Golgi network. It is found in the endoplasmic reticulum. The protein resides in the preautophagosomal structure. Component of the TRAPP I, TRAPP II and TRAPP III complexes which act as guanine nucleotide exchange factors (GEF) for YPT1. TRAPP I plays a key role in the late stages of endoplasmic reticulum to Golgi traffic. TRAPP II plays a role in intra-Golgi transport. TRAPP III plays a role in autophagosome formation. The sequence is that of Trafficking protein particle complex subunit 31 (TRS31) from Saccharomyces cerevisiae (strain ATCC 204508 / S288c) (Baker's yeast).